A 701-amino-acid polypeptide reads, in one-letter code: MARRGWRRAPLRRGVGSSPRARRLMRPLWLLLAVGVFDWAGASDGGGGEARAMDEEIVSEKQAEESHRQDSANLLIFILLLTLTILTIWLFKHRRARFLHETGLAMIYGLLVGLVLRYGIHVPSDVNNVTLSCEVQSSPTTLLVNVSGKFYEYMLKGEISSHELNNVQDNEMLRKVTFDPEVFFNILLPPIIFYAGYSLKRRHFFRNLGSILAYAFLGTAISCFVIGSIMYGCVTLMKVTGQLAGDFYFTDCLLFGAIVSATDPVTVLAIFHELQVDVELYALLFGESVLNDAVAIVLSSSIVAYQPAGDNSHTFDVTAMFKSIGIFLGIFSGSFAMGAATGVVTALVTKFTKLREFQLLETGLFFLMSWSTFLLAEAWGFTGVVAVLFCGITQAHYTYNNLSTESQHRTKQLFELLNFLAENFIFSYMGLTLFTFQNHVFNPTFVVGAFVAIFLGRAANIYPLSLLLNLGRRSKIGSNFQHMMMFAGLRGAMAFALAIRDTATYARQMMFSTTLLIVFFTVWVFGGGTTAMLSCLHIRVGVDSDQEHLGVPENERRTTKAESAWLFRMWYNFDHNYLKPLLTHSGPPLTTTLPACCGPIARCLTSPQAYENQEQLKDDDSDLILNDGDISLTYGDSTVNTEPATSSAPRRFMGNSSEDALDRELAFGDHELVIRGTRLVLPMDDSEPPLNLLDNTRHGPA.

Helical transmembrane passes span 71 to 91 and 103 to 123; these read SANL…IWLF and GLAM…IHVP. A glycan (N-linked (GlcNAc...) asparagine) is linked at Asn128. 8 helical membrane-spanning segments follow: residues 176–196, 211–231, 252–272, 278–298, 324–344, 372–392, 414–434, and 436–456; these read VTFD…FYAG, ILAY…SIMY, CLLF…AIFH, VELY…AIVL, IGIF…TGVV, TFLL…FCGI, FELL…LTLF, and FQNH…IFLG. Lys475 is covalently cross-linked (Glycyl lysine isopeptide (Lys-Gly) (interchain with G-Cter in ubiquitin)). 2 helical membrane passes run 479–499 and 515–535; these read NFQH…ALAI and LLIV…MLSC.

Belongs to the monovalent cation:proton antiporter 1 (CPA1) transporter (TC 2.A.36) family. In terms of assembly, homodimer. Interacts with RACK1; regulates the distribution of SLC9A6 between endosomes and the plasma membrane. Post-translationally, ubiquitinated (in vitro). In terms of processing, glycosylated. As to expression, ubiquitous. High expression in brain, skeletal muscle, and heart, but is also detected at lower levels in most other tissues.

It localises to the endosome membrane. The protein localises to the recycling endosome membrane. The protein resides in the early endosome membrane. It is found in the late endosome membrane. Its subcellular location is the cell membrane. It carries out the reaction Na(+)(in) + H(+)(out) = Na(+)(out) + H(+)(in). It catalyses the reaction K(+)(in) + H(+)(out) = K(+)(out) + H(+)(in). Functionally, endosomal Na(+), K(+)/H(+) antiporter. Mediates the electroneutral exchange of endosomal luminal H(+) for a cytosolic Na(+) or K(+). By facilitating proton efflux, SLC9A6 counteracts the acidity generated by vacuolar (V)-ATPase, thereby limiting luminal acidification. Responsible for alkalizing and maintaining the endosomal pH, and consequently in, e.g., endosome maturation and trafficking of recycling endosomal cargo. Plays a critical role during neurodevelopment by regulating synaptic development and plasticity. Implicated in the maintenance of cell polarity in a manner that is dependent on its ability to modulate intravesicular pH. Regulates intracelular pH in some specialized cells, osteoclasts and stereocilia where this transporter localizes to the plasma membrane. The chain is Sodium/hydrogen exchanger 6 from Homo sapiens (Human).